The chain runs to 234 residues: Phosphoribosylaminoimidazole-succinocarboxamide synthase (234 aa).

This sequence belongs to the SAICAR synthetase family.

The catalysed reaction is 5-amino-1-(5-phospho-D-ribosyl)imidazole-4-carboxylate + L-aspartate + ATP = (2S)-2-[5-amino-1-(5-phospho-beta-D-ribosyl)imidazole-4-carboxamido]succinate + ADP + phosphate + 2 H(+). Its pathway is purine metabolism; IMP biosynthesis via de novo pathway; 5-amino-1-(5-phospho-D-ribosyl)imidazole-4-carboxamide from 5-amino-1-(5-phospho-D-ribosyl)imidazole-4-carboxylate: step 1/2. The chain is Phosphoribosylaminoimidazole-succinocarboxamide synthase from Pyrococcus furiosus (strain ATCC 43587 / DSM 3638 / JCM 8422 / Vc1).